The chain runs to 277 residues: Putative serine/threonine-protein kinase PRKY (277 aa).

Over residues 1-12 (MEAPGPAQAAAA) the composition is skewed to low complexity. A disordered region spans residues 1 to 40 (MEAPGPAQAAAAESNSREVTEDAADWAPALCPSPEARSPE). The Protein kinase domain occupies 49–277 (CDALVTMGTG…DFHVKTGRMM (229 aa)). ATP contacts are provided by residues 55–63 (MGTGTFGRV) and K78. D172 (proton acceptor) is an active-site residue. T203 is subject to Phosphothreonine.

It belongs to the protein kinase superfamily. AGC Ser/Thr protein kinase family. cAMP subfamily. As to expression, ubiquitous.

The catalysed reaction is L-seryl-[protein] + ATP = O-phospho-L-seryl-[protein] + ADP + H(+). It carries out the reaction L-threonyl-[protein] + ATP = O-phospho-L-threonyl-[protein] + ADP + H(+). The sequence is that of Putative serine/threonine-protein kinase PRKY (PRKY) from Homo sapiens (Human).